Reading from the N-terminus, the 107-residue chain is U1-lycotoxin-Ls1m (107 aa).

Residues 1 to 20 (MMKVLVVVALLVTLISYSSS) form the signal peptide. Positions 21 to 41 (EGIDDLEADELLSLMANEQTR) are excised as a propeptide. 4 disulfides stabilise this stretch: C44–C59, C51–C68, C58–C86, and C70–C84.

It belongs to the neurotoxin 19 (CSTX) family. 04 (U1-Lctx) subfamily. As to expression, expressed by the venom gland.

The protein localises to the secreted. The polypeptide is U1-lycotoxin-Ls1m (Lycosa singoriensis (Wolf spider)).